We begin with the raw amino-acid sequence, 371 residues long: Chaperone protein DnaJ (371 aa).

Positions 5 to 70 (SYYDILGVSK…KKRQAYDQFG (66 aa)) constitute a J domain. The CR-type zinc finger occupies 139 to 217 (GREYKIEIPR…CGGQGLQEKR (79 aa)). The Zn(2+) site is built by C152, C155, C169, C172, C191, C194, C205, and C208. CXXCXGXG motif repeat units follow at residues 152-159 (CGDCNGSG), 169-176 (CPDCGGSG), 191-198 (CPTCRGKG), and 205-212 (CKTCGGQG).

This sequence belongs to the DnaJ family. Homodimer. The cofactor is Zn(2+).

The protein localises to the cytoplasm. Its function is as follows. Participates actively in the response to hyperosmotic and heat shock by preventing the aggregation of stress-denatured proteins and by disaggregating proteins, also in an autonomous, DnaK-independent fashion. Unfolded proteins bind initially to DnaJ; upon interaction with the DnaJ-bound protein, DnaK hydrolyzes its bound ATP, resulting in the formation of a stable complex. GrpE releases ADP from DnaK; ATP binding to DnaK triggers the release of the substrate protein, thus completing the reaction cycle. Several rounds of ATP-dependent interactions between DnaJ, DnaK and GrpE are required for fully efficient folding. Also involved, together with DnaK and GrpE, in the DNA replication of plasmids through activation of initiation proteins. This is Chaperone protein DnaJ from Leptospira borgpetersenii serovar Hardjo-bovis (strain JB197).